The chain runs to 1302 residues: Regulator of telomere elongation helicase 1 (1302 aa).

The Helicase ATP-binding domain occupies 7–297; the sequence is NGVTVDFPFQ…TKTAQQGEPH (291 aa). 42-49 is a binding site for ATP; that stretch reads SHTGTGKT. C146, C164, C173, and C208 together coordinate [4Fe-4S] cluster. The Nuclear localization signal signature appears at 152–168; the sequence is KKQESNHIQIHLCRKKV. The DEAH box signature appears at 251–254; it reads DEAH. The segment covering 758–767 has biased composition (low complexity); sequence PAPAPRATAP. The disordered stretch occupies residues 758–819; the sequence is PAPAPRATAP…AAGDPESSLC (62 aa). Residues 770-780 are compositionally biased toward basic and acidic residues; the sequence is REGEDAVREVK. Positions 873 to 879 match the Nuclear localization signal motif; that stretch reads PRGGRKK. Disordered stretches follow at residues 981-1006, 1019-1058, 1134-1153, and 1160-1234; these read RPEH…APDP, DPRE…GKQG, CTDL…PQEE, and VLTH…QAAG. Residues 1178–1187 show a composition bias toward polar residues; sequence KTQSKISSLL. A PIP-box motif is present at residues 1180–1187; the sequence is QSKISSLL.

It belongs to the helicase family. RAD3/XPD subfamily. Interacts with TERF1. Interacts (via PIP-box) with PCNA; the interaction is direct and essential for suppressing telomere fragility. Interacts with MMS19; the interaction mediates the association of RTEL1 with the cytosolic iron-sulfur protein assembly (CIA) complex.

It is found in the nucleus. The enzyme catalyses ATP + H2O = ADP + phosphate + H(+). Functionally, a probable ATP-dependent DNA helicase implicated in telomere-length regulation, DNA repair and the maintenance of genomic stability. Acts as an anti-recombinase to counteract toxic recombination and limit crossover during meiosis. Regulates meiotic recombination and crossover homeostasis by physically dissociating strand invasion events and thereby promotes noncrossover repair by meiotic synthesis dependent strand annealing (SDSA) as well as disassembly of D loop recombination intermediates. Also disassembles T loops and prevents telomere fragility by counteracting telomeric G4-DNA structures, which together ensure the dynamics and stability of the telomere. The polypeptide is Regulator of telomere elongation helicase 1 (Pongo abelii (Sumatran orangutan)).